The sequence spans 287 residues: Oxaloacetate decarboxylase (287 aa).

Serine 50 contacts substrate. Residue aspartate 88 participates in Mg(2+) binding. Substrate-binding residues include arginine 159 and histidine 235.

Belongs to the isocitrate lyase/PEP mutase superfamily. Oxaloacetate decarboxylase family. As to quaternary structure, homotetramer; dimer of dimers. Mg(2+) is required as a cofactor.

It catalyses the reaction oxaloacetate + H(+) = pyruvate + CO2. Its function is as follows. Catalyzes the decarboxylation of oxaloacetate into pyruvate. Seems to play a role in maintaining cellular concentrations of bicarbonate and pyruvate. In Pseudomonas paraeruginosa (strain DSM 24068 / PA7) (Pseudomonas aeruginosa (strain PA7)), this protein is Oxaloacetate decarboxylase.